The following is a 278-amino-acid chain: 4-diphosphocytidyl-2-C-methyl-D-erythritol kinase (278 aa).

The active site involves lysine 9. Residue proline 89 to alanine 99 participates in ATP binding. Aspartate 128 is an active-site residue.

The protein belongs to the GHMP kinase family. IspE subfamily.

It catalyses the reaction 4-CDP-2-C-methyl-D-erythritol + ATP = 4-CDP-2-C-methyl-D-erythritol 2-phosphate + ADP + H(+). The protein operates within isoprenoid biosynthesis; isopentenyl diphosphate biosynthesis via DXP pathway; isopentenyl diphosphate from 1-deoxy-D-xylulose 5-phosphate: step 3/6. Functionally, catalyzes the phosphorylation of the position 2 hydroxy group of 4-diphosphocytidyl-2C-methyl-D-erythritol. This is 4-diphosphocytidyl-2-C-methyl-D-erythritol kinase from Cereibacter sphaeroides (strain ATCC 17025 / ATH 2.4.3) (Rhodobacter sphaeroides).